The primary structure comprises 107 residues: Translation initiation factor IF-1, chloroplastic (107 aa).

In terms of domain architecture, S1-like spans 8-83 (REKKNPREAK…SKGRIIYRLP (76 aa)). Residues 81 to 107 (RLPHKDSKRTEDSKDTEDLKDTKDSKD) are disordered. Positions 83–107 (PHKDSKRTEDSKDTEDLKDTKDSKD) are enriched in basic and acidic residues.

The protein belongs to the IF-1 family. In terms of assembly, component of the 30S ribosomal translation pre-initiation complex which assembles on the 30S ribosome in the order IF-2 and IF-3, IF-1 and N-formylmethionyl-tRNA(fMet); mRNA recruitment can occur at any time during PIC assembly.

It localises to the plastid. It is found in the chloroplast. Its function is as follows. One of the essential components for the initiation of protein synthesis. Stabilizes the binding of IF-2 and IF-3 on the 30S subunit to which N-formylmethionyl-tRNA(fMet) subsequently binds. Helps modulate mRNA selection, yielding the 30S pre-initiation complex (PIC). Upon addition of the 50S ribosomal subunit IF-1, IF-2 and IF-3 are released leaving the mature 70S translation initiation complex. The sequence is that of Translation initiation factor IF-1, chloroplastic from Saccharum hybrid (Sugarcane).